A 456-amino-acid polypeptide reads, in one-letter code: Glycerol-3-phosphate acyltransferase 4 (456 aa).

An N-terminal signal peptide occupies residues Met-1–Gly-37. 2 consecutive transmembrane segments (helical) span residues Ile-156–Leu-176 and Ile-180–Leu-200. N-linked (GlcNAc...) asparagine glycosylation occurs at Asn-247. Residues His-248–Asp-253 carry the HXXXXD motif motif. N-linked (GlcNAc...) asparagine glycosylation is found at Asn-327, Asn-328, and Asn-362.

It belongs to the 1-acyl-sn-glycerol-3-phosphate acyltransferase family.

It is found in the endoplasmic reticulum membrane. It carries out the reaction sn-glycerol 3-phosphate + an acyl-CoA = a 1-acyl-sn-glycero-3-phosphate + CoA. It catalyses the reaction dodecanoyl-CoA + sn-glycerol 3-phosphate = 1-dodecanoyl-sn-glycerol 3-phosphate + CoA. The catalysed reaction is sn-glycerol 3-phosphate + hexadecanoyl-CoA = 1-hexadecanoyl-sn-glycero-3-phosphate + CoA. The enzyme catalyses sn-glycerol 3-phosphate + octadecanoyl-CoA = 1-octadecanoyl-sn-glycero-3-phosphate + CoA. It carries out the reaction sn-glycerol 3-phosphate + (9Z)-octadecenoyl-CoA = 1-(9Z-octadecenoyl)-sn-glycero-3-phosphate + CoA. It catalyses the reaction (9Z,12Z)-octadecadienoyl-CoA + sn-glycerol 3-phosphate = 1-(9Z,12Z)-octadecadienoyl-sn-glycero-3-phosphate + CoA. The protein operates within phospholipid metabolism; CDP-diacylglycerol biosynthesis; CDP-diacylglycerol from sn-glycerol 3-phosphate: step 1/3. Functionally, converts glycerol-3-phosphate to 1-acyl-sn-glycerol-3-phosphate (lysophosphatidic acid or LPA) by incorporating an acyl moiety at the sn-1 position of the glycerol backbone. Active against both saturated and unsaturated long-chain fatty acyl-CoAs. Protects cells against lipotoxicity. This Bos taurus (Bovine) protein is Glycerol-3-phosphate acyltransferase 4.